Here is a 75-residue protein sequence, read N- to C-terminus: MPQLSRYSDERVEELLTELASVLSKHKAPTDLSLMVLGNMVTNVINNSVAPAQRKTLARSFAEALQSSIRDDNAH.

It belongs to the UPF0352 family.

The chain is UPF0352 protein ESA_01049 from Cronobacter sakazakii (strain ATCC BAA-894) (Enterobacter sakazakii).